A 309-amino-acid polypeptide reads, in one-letter code: Ribosomal RNA small subunit methyltransferase H (309 aa).

Residues 33–35 (GGH), aspartate 53, phenylalanine 79, aspartate 100, and glutamine 107 contribute to the S-adenosyl-L-methionine site.

It belongs to the methyltransferase superfamily. RsmH family.

The protein localises to the cytoplasm. The catalysed reaction is cytidine(1402) in 16S rRNA + S-adenosyl-L-methionine = N(4)-methylcytidine(1402) in 16S rRNA + S-adenosyl-L-homocysteine + H(+). In terms of biological role, specifically methylates the N4 position of cytidine in position 1402 (C1402) of 16S rRNA. This is Ribosomal RNA small subunit methyltransferase H from Clostridium botulinum (strain ATCC 19397 / Type A).